The sequence spans 164 residues: SsrA-binding protein (164 aa).

Belongs to the SmpB family.

The protein localises to the cytoplasm. Functionally, required for rescue of stalled ribosomes mediated by trans-translation. Binds to transfer-messenger RNA (tmRNA), required for stable association of tmRNA with ribosomes. tmRNA and SmpB together mimic tRNA shape, replacing the anticodon stem-loop with SmpB. tmRNA is encoded by the ssrA gene; the 2 termini fold to resemble tRNA(Ala) and it encodes a 'tag peptide', a short internal open reading frame. During trans-translation Ala-aminoacylated tmRNA acts like a tRNA, entering the A-site of stalled ribosomes, displacing the stalled mRNA. The ribosome then switches to translate the ORF on the tmRNA; the nascent peptide is terminated with the 'tag peptide' encoded by the tmRNA and targeted for degradation. The ribosome is freed to recommence translation, which seems to be the essential function of trans-translation. The polypeptide is SsrA-binding protein (Corynebacterium efficiens (strain DSM 44549 / YS-314 / AJ 12310 / JCM 11189 / NBRC 100395)).